Here is a 554-residue protein sequence, read N- to C-terminus: MEKQSLTFDGDEEAKIDRKSSKYHPSIWGDYFIQNSSLTHAKESTQRMIKRVEELKVQVKSMFKDTSDLLQLMNLINSIQMLGLDYHFENEIDEALRLIYEVDDKSYGLYETSLRFQLLRQHGYHVSADIFNKFKDDNGSFISSLNGDAKGLLSLYNVSYLGTHGETILDEAKSFTKPQLVSLMSELEQSLAAQVSLFLELPLCRRNKILLARKYILIYQEDAMRNNVILELAKLNFNLLQSLYQEELKKISIWWNDLAFAKSLSFTRDRVVEGYYWVLTIYFEPQHSRARVICSKVFAFLSIMDDIYDNYGILEECTLLTEAIKRWNPQAIDGLPEYLKDYYLKLLKTFEEFEDELELNEKYRMLYLQDEVKALAISYLQEAKWGIERHVPSLDEHLHNSLISSGSSTVICASFVGMGEVATKEVFDWLSSFPKVVEACCVIGRLLNDIRSHELEQGRDHTASTVESYMKEHDTNVDVACEKLREIVEKAWKDLNNESLNPTKVPRLMIERIVNLSKSNEEIYKYNDTYTNSDTTMKDNISLVLVESCDYFNK.

Asp305, Asp309, and Glu456 together coordinate Mg(2+). Residues 305–309 (DDIYD) carry the DDXXD motif motif.

This sequence belongs to the terpene synthase family. Requires Mg(2+) as cofactor. It depends on Mn(2+) as a cofactor. As to expression, expressed in rhizomes. Detected in stems, but not in leaves.

It is found in the cytoplasm. It carries out the reaction (2E,6E)-farnesyl diphosphate + H2O = beta-eudesmol + diphosphate. It catalyses the reaction (2E,6E)-farnesyl diphosphate + H2O = 10-epi-gamma-eudesmol + diphosphate. The catalysed reaction is (2E,6E)-farnesyl diphosphate + H2O = alpha-eudesmol + diphosphate. The protein operates within secondary metabolite biosynthesis; terpenoid biosynthesis. Functionally, involved in the biosynthesis of beta-eudesmol, a sesquiterpene with antifungal activity and responsible for resistance of plants to ant attack. Produces mainly beta-eudesmol, but also smaller amounts of 10-epi-gamma-eudesmol, alpha-eudesmol and aristolene. This Zingiber zerumbet (Shampoo ginger) protein is Beta-eudesmol synthase (ZSS2).